Consider the following 144-residue polypeptide: UPF0225 protein RSc0270 (144 aa).

The protein belongs to the UPF0225 family.

This Ralstonia nicotianae (strain ATCC BAA-1114 / GMI1000) (Ralstonia solanacearum) protein is UPF0225 protein RSc0270.